Reading from the N-terminus, the 174-residue chain is Guided entry of tail-anchored proteins factor 1 (174 aa).

At 1–8 the chain is on the lumenal side; the sequence is MSASETDR. The chain crosses the membrane as a helical span at residues 9–29; the sequence is WAWLLVLCFVFGCNVLRILLP. The Cytoplasmic segment spans residues 30–99; sequence TLSSFISRVL…VKARTAQLAK (70 aa). Positions 39–94 form a coiled coil; sequence LQKDAEQESQMRAEIQSMKQELSTVNMMDEFARYARLERKINKMTDKLKTHVKART. Residues 39–97 are interaction with GET3/TRC40; the sequence is LQKDAEQESQMRAEIQSMKQELSTVNMMDEFARYARLERKINKMTDKLKTHVKARTAQL. Residues 100-120 traverse the membrane as a helical segment; it reads IKWFISVAFYVLQAALMISLI. Residues 121–148 lie on the Lumenal side of the membrane; it reads WKYYSVPVAVVPSKWITPLDRLVAFPTR. The chain crosses the membrane as a helical span at residues 149–169; the sequence is VAGGIGVTCWILVCNKVVAII. Topologically, residues 170–174 are cytoplasmic; it reads LHPFS.

This sequence belongs to the WRB/GET1 family. Component of the Golgi to ER traffic (GET) complex, which is composed of GET1, CAMLG/GET2 and GET3. Within the complex, GET1 and CAMLG form a heterotetramer which is stabilized by phosphatidylinositol binding and which binds to the GET3 homodimer. Interacts with CAMLG/GET2 (via C-terminus). GET3 shows a higher affinity for CAMLG than for GET1.

It localises to the endoplasmic reticulum membrane. Functionally, required for the post-translational delivery of tail-anchored (TA) proteins to the endoplasmic reticulum. Together with CAMLG/GET2, acts as a membrane receptor for soluble GET3/TRC40, which recognizes and selectively binds the transmembrane domain of TA proteins in the cytosol. Required to ensure correct topology and ER insertion of CAMLG. The polypeptide is Guided entry of tail-anchored proteins factor 1 (Rattus norvegicus (Rat)).